A 192-amino-acid polypeptide reads, in one-letter code: Erythropoietin (192 aa).

The N-terminal stretch at 1–25 is a signal peptide; sequence MGARDCTPLLMLSFLLFPLGFPVLG. 2 cysteine pairs are disulfide-bonded: cysteine 32–cysteine 187 and cysteine 54–cysteine 58. Asparagine 49 is a glycosylation site (N-linked (GlcNAc...) asparagine). 2 N-linked (GlcNAc...) asparagine glycosylation sites follow: asparagine 63 and asparagine 108.

It belongs to the EPO/TPO family. As to expression, produced by kidney or liver of adult mammals and by liver of fetal or neonatal mammals.

It is found in the secreted. In terms of biological role, hormone involved in the regulation of erythrocyte proliferation and differentiation and the maintenance of a physiological level of circulating erythrocyte mass. Binds to EPOR leading to EPOR dimerization and JAK2 activation thereby activating specific downstream effectors, including STAT1 and STAT3. The protein is Erythropoietin (EPO) of Bos taurus (Bovine).